A 315-amino-acid polypeptide reads, in one-letter code: Ribonuclease Z (315 aa).

Residues H61, H63, D65, H66, H151, D219, and H278 each contribute to the Zn(2+) site. D65 acts as the Proton acceptor in catalysis.

This sequence belongs to the RNase Z family. Homodimer. The cofactor is Zn(2+).

It catalyses the reaction Endonucleolytic cleavage of RNA, removing extra 3' nucleotides from tRNA precursor, generating 3' termini of tRNAs. A 3'-hydroxy group is left at the tRNA terminus and a 5'-phosphoryl group is left at the trailer molecule.. Its function is as follows. Zinc phosphodiesterase, which displays some tRNA 3'-processing endonuclease activity. Probably involved in tRNA maturation, by removing a 3'-trailer from precursor tRNA. This is Ribonuclease Z from Clostridium botulinum (strain Eklund 17B / Type B).